An 80-amino-acid chain; its full sequence is RNA-binding protein Hfq (80 aa).

The region spanning 10–70 (DIFLNNARKE…ISTVSPAKPI (61 aa)) is the Sm domain.

It belongs to the Hfq family. As to quaternary structure, homohexamer.

In terms of biological role, RNA chaperone that binds small regulatory RNA (sRNAs) and mRNAs to facilitate mRNA translational regulation in response to envelope stress, environmental stress and changes in metabolite concentrations. Also binds with high specificity to tRNAs. The chain is RNA-binding protein Hfq from Clostridium perfringens (strain SM101 / Type A).